The sequence spans 68 residues: Conotoxin ba14a (68 aa).

The signal sequence occupies residues Met1 to Gly20. Positions Leu21–Arg50 are excised as a propeptide.

Contains 2 disulfide bonds. As to expression, expressed by the venom duct.

The protein resides in the secreted. The sequence is that of Conotoxin ba14a from Conus bayani (Bayan's cone).